Here is a 270-residue protein sequence, read N- to C-terminus: MENIGRQRPIGVFDSGIGGLTNVRALMERLPMENIIYFGDTARVPYGTKSKATIENFSMQIVDFLLEHDVKAMVIACNTIAAVAGQKIRQKTGNMPVLDVISAGAKAALATTRNNKIGIIATNTTVNSNAYARAIHRNNPDTLVRTQAAPLLVPLVEEGWLEHEVTRLTVCEYLKPLLADGIDTLVLGCTHFPLLKPLIGREAHNVALVDSAITTAEETARVLAQEGLLNTDNNNPDYRFYVSDIPLKFRTIGERFLGRTMEQIEMVSLG.

Residues 14-15 (DS) and 46-47 (YG) each bind substrate. The active-site Proton donor/acceptor is the Cys-77. 78-79 (NT) serves as a coordination point for substrate. Catalysis depends on Cys-189, which acts as the Proton donor/acceptor. 190-191 (TH) contributes to the substrate binding site.

The protein belongs to the aspartate/glutamate racemases family.

It carries out the reaction L-glutamate = D-glutamate. Its pathway is cell wall biogenesis; peptidoglycan biosynthesis. Functionally, provides the (R)-glutamate required for cell wall biosynthesis. The chain is Glutamate racemase from Neisseria meningitidis serogroup C.